Consider the following 154-residue polypeptide: tRNA (cytidine(34)-2'-O)-methyltransferase (154 aa).

Residues Leu78, Gly100, Ile122, and Ser130 each coordinate S-adenosyl-L-methionine.

Belongs to the class IV-like SAM-binding methyltransferase superfamily. RNA methyltransferase TrmH family. TrmL subfamily. Homodimer.

The protein resides in the cytoplasm. The enzyme catalyses cytidine(34) in tRNA + S-adenosyl-L-methionine = 2'-O-methylcytidine(34) in tRNA + S-adenosyl-L-homocysteine + H(+). It catalyses the reaction 5-carboxymethylaminomethyluridine(34) in tRNA(Leu) + S-adenosyl-L-methionine = 5-carboxymethylaminomethyl-2'-O-methyluridine(34) in tRNA(Leu) + S-adenosyl-L-homocysteine + H(+). In terms of biological role, methylates the ribose at the nucleotide 34 wobble position in the two leucyl isoacceptors tRNA(Leu)(CmAA) and tRNA(Leu)(cmnm5UmAA). Catalyzes the methyl transfer from S-adenosyl-L-methionine to the 2'-OH of the wobble nucleotide. This is tRNA (cytidine(34)-2'-O)-methyltransferase from Saccharophagus degradans (strain 2-40 / ATCC 43961 / DSM 17024).